Reading from the N-terminus, the 410-residue chain is Arginine deiminase (410 aa).

Residue C400 is the Amidino-cysteine intermediate of the active site.

The protein belongs to the arginine deiminase family.

It localises to the cytoplasm. It carries out the reaction L-arginine + H2O = L-citrulline + NH4(+). Its pathway is amino-acid degradation; L-arginine degradation via ADI pathway; carbamoyl phosphate from L-arginine: step 1/2. In Bacillus thuringiensis subsp. konkukian (strain 97-27), this protein is Arginine deiminase.